The primary structure comprises 204 residues: Urease accessory protein UreG (204 aa).

11-18 contacts GTP; sequence GPVGAGKT.

The protein belongs to the SIMIBI class G3E GTPase family. UreG subfamily. As to quaternary structure, homodimer. UreD, UreF and UreG form a complex that acts as a GTP-hydrolysis-dependent molecular chaperone, activating the urease apoprotein by helping to assemble the nickel containing metallocenter of UreC. The UreE protein probably delivers the nickel.

Its subcellular location is the cytoplasm. In terms of biological role, facilitates the functional incorporation of the urease nickel metallocenter. This process requires GTP hydrolysis, probably effectuated by UreG. This is Urease accessory protein UreG from Staphylococcus aureus (strain MSSA476).